The chain runs to 316 residues: Ribonuclease HIII (316 aa).

An RNase H type-2 domain is found at Gln101–Lys316. 3 residues coordinate a divalent metal cation: Asp107, Glu108, and Asp211.

It belongs to the RNase HII family. RnhC subfamily. Mn(2+) serves as cofactor. The cofactor is Mg(2+).

The protein resides in the cytoplasm. It catalyses the reaction Endonucleolytic cleavage to 5'-phosphomonoester.. Its function is as follows. Endonuclease that specifically degrades the RNA of RNA-DNA hybrids. This chain is Ribonuclease HIII (rnhC), found in Ureaplasma parvum serovar 3 (strain ATCC 700970).